We begin with the raw amino-acid sequence, 566 residues long: 3-oxosteroid 1-dehydrogenase (566 aa).

10–39 provides a ligand contact to FAD; the sequence is DVVVVGSGAAGMVAALVAAHRGLSTVVVEK.

It belongs to the FAD-dependent oxidoreductase 2 family. 3-oxosteroid dehydrogenase subfamily. FAD is required as a cofactor.

It catalyses the reaction a 3-oxosteroid + A = a 3-oxo-Delta(1)-steroid + AH2. The catalysed reaction is a 3-oxo-Delta(4)-steroid + A = a 3-oxo-Delta(1,4)-steroid + AH2. In terms of biological role, involved in the degradation of cholesterol. Catalyzes the elimination of the C-1 and C-2 hydrogen atoms of the A-ring from the polycyclic ring structure of 3-ketosteroids. Is also involved in the formation of 3-keto-1,4-diene-steroid from 3-keto-4-ene-steroid. The protein is 3-oxosteroid 1-dehydrogenase (kstD) of Mycobacterium tuberculosis (strain CDC 1551 / Oshkosh).